A 196-amino-acid polypeptide reads, in one-letter code: Ribosomal RNA large subunit methyltransferase E (196 aa).

G52, W54, D72, D88, and D111 together coordinate S-adenosyl-L-methionine. The Proton acceptor role is filled by K151.

It belongs to the class I-like SAM-binding methyltransferase superfamily. RNA methyltransferase RlmE family.

Its subcellular location is the cytoplasm. It catalyses the reaction uridine(2552) in 23S rRNA + S-adenosyl-L-methionine = 2'-O-methyluridine(2552) in 23S rRNA + S-adenosyl-L-homocysteine + H(+). Functionally, specifically methylates the uridine in position 2552 of 23S rRNA at the 2'-O position of the ribose in the fully assembled 50S ribosomal subunit. In Cenarchaeum symbiosum (strain A), this protein is Ribosomal RNA large subunit methyltransferase E.